The sequence spans 151 residues: Ribosome maturation factor RimP (151 aa).

The protein belongs to the RimP family.

It is found in the cytoplasm. Functionally, required for maturation of 30S ribosomal subunits. The protein is Ribosome maturation factor RimP of Thermoanaerobacter pseudethanolicus (strain ATCC 33223 / 39E) (Clostridium thermohydrosulfuricum).